Consider the following 119-residue polypeptide: Beta-2-microglobulin (119 aa).

Positions M1–A20 are cleaved as a signal peptide. The region spanning P25–K114 is the Ig-like C1-type domain. C45 and C100 are oxidised to a cystine.

The protein belongs to the beta-2-microglobulin family. As to quaternary structure, heterodimer of an alpha chain and a beta chain. Beta-2-microglobulin is the beta-chain of major histocompatibility complex class I molecules.

The protein resides in the secreted. Functionally, component of the class I major histocompatibility complex (MHC). Involved in the presentation of peptide antigens to the immune system. This Plecturocebus moloch (Dusky titi monkey) protein is Beta-2-microglobulin (B2M).